Consider the following 462-residue polypeptide: tRNA modification GTPase MnmE (462 aa).

(6S)-5-formyl-5,6,7,8-tetrahydrofolate is bound by residues arginine 27, glutamate 89, and arginine 128. Residues 224–383 (GLATAIVGRP…LDERIAKLFF (160 aa)) form the TrmE-type G domain. A K(+)-binding site is contributed by asparagine 234. Residues 234–239 (NVGKSS), 253–259 (TDVAGTT), and 278–281 (DTAG) contribute to the GTP site. A Mg(2+)-binding site is contributed by serine 238. K(+) contacts are provided by threonine 253, valine 255, and threonine 258. Threonine 259 contacts Mg(2+). Lysine 462 provides a ligand contact to (6S)-5-formyl-5,6,7,8-tetrahydrofolate.

It belongs to the TRAFAC class TrmE-Era-EngA-EngB-Septin-like GTPase superfamily. TrmE GTPase family. In terms of assembly, homodimer. Heterotetramer of two MnmE and two MnmG subunits. K(+) is required as a cofactor.

Its subcellular location is the cytoplasm. Exhibits a very high intrinsic GTPase hydrolysis rate. Involved in the addition of a carboxymethylaminomethyl (cmnm) group at the wobble position (U34) of certain tRNAs, forming tRNA-cmnm(5)s(2)U34. The sequence is that of tRNA modification GTPase MnmE from Lacticaseibacillus paracasei (strain ATCC 334 / BCRC 17002 / CCUG 31169 / CIP 107868 / KCTC 3260 / NRRL B-441) (Lactobacillus paracasei).